Here is an 836-residue protein sequence, read N- to C-terminus: DNA gyrase subunit A (836 aa).

The 465-residue stretch at 46–510 folds into the Topo IIA-type catalytic domain; it reads LPDARDGLKP…ISEEIDDESL (465 aa). The active-site O-(5'-phospho-DNA)-tyrosine intermediate is the Y134. A GyrA-box motif is present at residues 537–543; that stretch reads QHRGGVG.

Belongs to the type II topoisomerase GyrA/ParC subunit family. In terms of assembly, heterotetramer, composed of two GyrA and two GyrB chains. In the heterotetramer, GyrA contains the active site tyrosine that forms a transient covalent intermediate with DNA, while GyrB binds cofactors and catalyzes ATP hydrolysis.

The protein localises to the cytoplasm. The enzyme catalyses ATP-dependent breakage, passage and rejoining of double-stranded DNA.. A type II topoisomerase that negatively supercoils closed circular double-stranded (ds) DNA in an ATP-dependent manner to modulate DNA topology and maintain chromosomes in an underwound state. Negative supercoiling favors strand separation, and DNA replication, transcription, recombination and repair, all of which involve strand separation. Also able to catalyze the interconversion of other topological isomers of dsDNA rings, including catenanes and knotted rings. Type II topoisomerases break and join 2 DNA strands simultaneously in an ATP-dependent manner. The chain is DNA gyrase subunit A from Mycoplasma genitalium (strain ATCC 33530 / DSM 19775 / NCTC 10195 / G37) (Mycoplasmoides genitalium).